A 66-amino-acid chain; its full sequence is ATP synthase F(0) complex subunit 8 (66 aa).

A helical membrane pass occupies residues 8–24 (IWLLAVVIVLTTLMIFL). The residue at position 54 (lysine 54) is an N6-acetyllysine; alternate. Lysine 54 bears the N6-succinyllysine; alternate mark. Position 57 is an N6-acetyllysine (lysine 57).

It belongs to the ATPase protein 8 family. Component of the ATP synthase complex composed at least of ATP5F1A/subunit alpha, ATP5F1B/subunit beta, ATP5MC1/subunit c (homooctomer), MT-ATP6/subunit a, MT-ATP8/subunit 8, ATP5ME/subunit e, ATP5MF/subunit f, ATP5MG/subunit g, ATP5MK/subunit k, ATP5MJ/subunit j, ATP5F1C/subunit gamma, ATP5F1D/subunit delta, ATP5F1E/subunit epsilon, ATP5PF/subunit F6, ATP5PB/subunit b, ATP5PD/subunit d, ATP5PO/subunit OSCP. ATP synthase complex consists of a soluble F(1) head domain (subunits alpha(3) and beta(3)) - the catalytic core - and a membrane F(0) domain - the membrane proton channel (subunits c, a, 8, e, f, g, k and j). These two domains are linked by a central stalk (subunits gamma, delta, and epsilon) rotating inside the F1 region and a stationary peripheral stalk (subunits F6, b, d, and OSCP). Interacts with PRICKLE3.

The protein resides in the mitochondrion membrane. Subunit 8, of the mitochondrial membrane ATP synthase complex (F(1)F(0) ATP synthase or Complex V) that produces ATP from ADP in the presence of a proton gradient across the membrane which is generated by electron transport complexes of the respiratory chain. ATP synthase complex consist of a soluble F(1) head domain - the catalytic core - and a membrane F(1) domain - the membrane proton channel. These two domains are linked by a central stalk rotating inside the F(1) region and a stationary peripheral stalk. During catalysis, ATP synthesis in the catalytic domain of F(1) is coupled via a rotary mechanism of the central stalk subunits to proton translocation. In vivo, can only synthesize ATP although its ATP hydrolase activity can be activated artificially in vitro. Part of the complex F(0) domain. This is ATP synthase F(0) complex subunit 8 from Loxodonta africana (African elephant).